The chain runs to 490 residues: Ribosomal L1 domain-containing protein 1 (490 aa).

Residue Met1 is modified to N-acetylmethionine. The span at Met1–Ala27 shows a compositional bias: low complexity. A disordered region spans residues Met1–Lys33. Glycyl lysine isopeptide (Lys-Gly) (interchain with G-Cter in SUMO2) cross-links involve residues Lys120 and Lys254. Residues Leu280–Glu293 are compositionally biased toward basic residues. A coiled-coil region spans residues Leu280–Ala313. The tract at residues Leu280 to Thr490 is disordered. Residues Thr329–His343 are compositionally biased toward basic and acidic residues. The residue at position 340 (Thr340) is a Phosphothreonine. The segment covering Gly344–Ala353 has biased composition (basic residues). The residue at position 358 (Thr358) is a Phosphothreonine. Phosphoserine is present on Ser361. Thr375 carries the phosphothreonine modification. Basic and acidic residues predominate over residues Pro376–Lys385. A Glycyl lysine isopeptide (Lys-Gly) (interchain with G-Cter in SUMO2) cross-link involves residue Lys380. Ser392 and Ser396 each carry phosphoserine. Phosphothreonine is present on residues Thr415 and Thr423. A Phosphoserine modification is found at Ser427. The span at Ser427–Ala460 shows a compositional bias: basic and acidic residues. Lys435 participates in a covalent cross-link: Glycyl lysine isopeptide (Lys-Gly) (interchain with G-Cter in SUMO2). Phosphoserine is present on Ser443. Lys461 participates in a covalent cross-link: Glycyl lysine isopeptide (Lys-Gly) (interchain with G-Cter in SUMO2). A Phosphothreonine modification is found at Thr465. Position 468 is an N6-acetyllysine (Lys468). At Ser469 the chain carries Phosphoserine. Over residues Ser469–Thr490 the composition is skewed to basic residues.

Belongs to the universal ribosomal protein uL1 family. Highly divergent. Interacts with ING1 (isoform 2). Interacts with KPNA7 and KPNA2. In terms of tissue distribution, expressed at high intensities in the heart, skeletal muscle, and placenta.

The protein localises to the nucleus. It is found in the nucleolus. In terms of biological role, regulates cellular senescence through inhibition of PTEN translation. Acts as a pro-apoptotic regulator in response to DNA damage. The polypeptide is Ribosomal L1 domain-containing protein 1 (RSL1D1) (Homo sapiens (Human)).